Here is a 619-residue protein sequence, read N- to C-terminus: ATP-dependent DNA helicase RecQ (619 aa).

Residues Ile-37–His-205 enclose the Helicase ATP-binding domain. Met-50–Ser-57 lines the ATP pocket. A DEAH box motif is present at residues Asp-149–His-152. The 146-residue stretch at Gln-229–Ile-374 folds into the Helicase C-terminal domain. Zn(2+) contacts are provided by Cys-383, Cys-400, Cys-403, and Cys-406. The HRDC domain maps to Ala-535–Ala-615.

The protein belongs to the helicase family. RecQ subfamily. The cofactor is Mg(2+). It depends on Zn(2+) as a cofactor.

It catalyses the reaction Couples ATP hydrolysis with the unwinding of duplex DNA by translocating in the 3'-5' direction.. The catalysed reaction is ATP + H2O = ADP + phosphate + H(+). Its function is as follows. An ATP-dependent DNA helicase which unwinds DNA in a 3'-5' direction. Plays a role in recombination. The polypeptide is ATP-dependent DNA helicase RecQ (Haemophilus influenzae (strain ATCC 51907 / DSM 11121 / KW20 / Rd)).